Here is a 404-residue protein sequence, read N- to C-terminus: MQVSIACTEQNLRSRSSEDRLCGPRPGPGGGNGGPAGGGHGNPPGGGGSGPKARAALVPRPPAPAGALRESTGRGTGMKYRNLGKSGLRVSCLGLGTWVTFGSQISDETAEDVLTVAYEHGVNLFDTAEVYAAGKAERTLGNILKSKGWRRSSYVITTKIFWGGQAETERGLSRKHIIEGLRGSLERLQLGYVDIVFANRSDPNCPMEEIVRAMTYVINQGLALYWGTSRWGAAEIMEAYSMARQFNLIPPVCEQAEHHLFQREKVEMQLPELYHKIGVGSVTWYPLACGLITSKYDGRVPDTCRASIKGYQWLKDKVQSEDGKKQQAKVMDLLPVAHQLGCTVAQLAIAWCLRSEGVSSVLLGVSSAEQLIEHLGALQVLSQLTPQTVMEIDGLLGNKPHSKK.

Positions 1–14 (MQVSIACTEQNLRS) are enriched in polar residues. A disordered region spans residues 1–77 (MQVSIACTEQ…LRESTGRGTG (77 aa)). A compositionally biased stretch (gly residues) spans 28–50 (PGGGNGGPAGGGHGNPPGGGGSG). 4 residues coordinate NADP(+): T97, W98, Q104, and D126. Y131 (proton donor/acceptor) is an active-site residue. NADP(+)-binding residues include N199, S229, R230, Q255, W284, P286, L287, A288, C289, K295, R305, G364, S366, Q370, and E373.

This sequence belongs to the shaker potassium channel beta subunit family. In terms of assembly, forms heteromultimeric complex with alpha subunits. Interacts with KCNA5 and KCNB2. Brain specific. Most prominent expression in cerebellum. Weaker signals detected in cortex, occipital lobe, frontal lobe and temporal lobe. Not detected in spinal cord, heart, lung, liver, kidney, pancreas, placenta and skeletal muscle.

The protein localises to the cytoplasm. Its function is as follows. Regulatory subunit of the voltage-gated potassium (Kv) channels composed of pore-forming and potassium-conducting alpha subunits and of regulatory beta subunit. The beta-3/KCNAB3 subunit may mediate closure of potassium channels. Increases inactivation of Kv1.5/KCNA5 alpha subunit-containing channels. May display nicotinamide adenine dinucleotide phosphate (NADPH)-dependent aldoketoreductase activity. The binding of oxidized and reduced NADP(H) cofactors may be required for the regulation of potassium channel activity. This chain is Voltage-gated potassium channel subunit beta-3, found in Homo sapiens (Human).